Here is a 59-residue protein sequence, read N- to C-terminus: MKVFSAVLIILFVCSMIIGINAVRIPVSCKHSGQCLKPCKDAGMRFGKCMNGKCDCTPK.

The first 22 residues, methionine 1 to alanine 22, serve as a signal peptide directing secretion. Intrachain disulfides connect cysteine 29–cysteine 49, cysteine 35–cysteine 54, and cysteine 39–cysteine 56. Residues glycine 47 to cysteine 54 form an interaction with Ca(2+)-activated K(+) channels region.

This sequence belongs to the short scorpion toxin superfamily. Potassium channel inhibitor family. Alpha-KTx 03 subfamily. Expressed by the venom gland.

The protein resides in the secreted. Functionally, has also been shown to inhibit with high potency Kv1.3/KCNA3 and with low potency Kv1.1/KCNA1 and Kv1.2/KCNA2 voltage-gated potassium channels. Also binds and inhibits the molluscan calcium-activated potassium channels KCa (Kd=135 nM). The protein is Potassium channel toxin alpha-KTx 3.5 (KTX2) of Androctonus australis (Sahara scorpion).